The chain runs to 420 residues: Serine hydroxymethyltransferase (420 aa).

Residues Leu-121 and 125–127 contribute to the (6S)-5,6,7,8-tetrahydrofolate site; that span reads GHL. The residue at position 230 (Lys-230) is an N6-(pyridoxal phosphate)lysine. (6S)-5,6,7,8-tetrahydrofolate-binding positions include Glu-246 and 354 to 356; that span reads SPF.

It belongs to the SHMT family. In terms of assembly, homodimer. Requires pyridoxal 5'-phosphate as cofactor.

The protein resides in the cytoplasm. It carries out the reaction (6R)-5,10-methylene-5,6,7,8-tetrahydrofolate + glycine + H2O = (6S)-5,6,7,8-tetrahydrofolate + L-serine. Its pathway is one-carbon metabolism; tetrahydrofolate interconversion. The protein operates within amino-acid biosynthesis; glycine biosynthesis; glycine from L-serine: step 1/1. In terms of biological role, catalyzes the reversible interconversion of serine and glycine with tetrahydrofolate (THF) serving as the one-carbon carrier. This reaction serves as the major source of one-carbon groups required for the biosynthesis of purines, thymidylate, methionine, and other important biomolecules. Also exhibits THF-independent aldolase activity toward beta-hydroxyamino acids, producing glycine and aldehydes, via a retro-aldol mechanism. This chain is Serine hydroxymethyltransferase, found in Rickettsia canadensis (strain McKiel).